We begin with the raw amino-acid sequence, 40 residues long: Large ribosomal subunit protein bL36A (40 aa).

It belongs to the bacterial ribosomal protein bL36 family.

This is Large ribosomal subunit protein bL36A from Renibacterium salmoninarum (strain ATCC 33209 / DSM 20767 / JCM 11484 / NBRC 15589 / NCIMB 2235).